Reading from the N-terminus, the 106-residue chain is Large ribosomal subunit protein uL24 (106 aa).

It belongs to the universal ribosomal protein uL24 family. In terms of assembly, part of the 50S ribosomal subunit.

One of two assembly initiator proteins, it binds directly to the 5'-end of the 23S rRNA, where it nucleates assembly of the 50S subunit. Its function is as follows. One of the proteins that surrounds the polypeptide exit tunnel on the outside of the subunit. The polypeptide is Large ribosomal subunit protein uL24 (Polaromonas naphthalenivorans (strain CJ2)).